The sequence spans 289 residues: 2-dehydro-3-deoxyphosphooctonate aldolase (289 aa).

The protein belongs to the KdsA family.

Its subcellular location is the cytoplasm. The enzyme catalyses D-arabinose 5-phosphate + phosphoenolpyruvate + H2O = 3-deoxy-alpha-D-manno-2-octulosonate-8-phosphate + phosphate. It participates in carbohydrate biosynthesis; 3-deoxy-D-manno-octulosonate biosynthesis; 3-deoxy-D-manno-octulosonate from D-ribulose 5-phosphate: step 2/3. The protein operates within bacterial outer membrane biogenesis; lipopolysaccharide biosynthesis. The chain is 2-dehydro-3-deoxyphosphooctonate aldolase from Cupriavidus necator (strain ATCC 17699 / DSM 428 / KCTC 22496 / NCIMB 10442 / H16 / Stanier 337) (Ralstonia eutropha).